A 132-amino-acid polypeptide reads, in one-letter code: Small ribosomal subunit protein uS11 (132 aa).

It belongs to the universal ribosomal protein uS11 family. Part of the 30S ribosomal subunit.

Functionally, located on the platform of the 30S subunit. The polypeptide is Small ribosomal subunit protein uS11 (Thermoplasma volcanium (strain ATCC 51530 / DSM 4299 / JCM 9571 / NBRC 15438 / GSS1)).